The primary structure comprises 1052 residues: Carboxylic acid reductase (1052 aa).

Positions Arg-21–Tyr-344 are adenylation (A) domain. AMP-binding positions include Ser-334–Ala-335, Thr-339, and Tyr-419–Arg-422. The Carrier domain occupies Ser-560–Val-643. Ser-595 is subject to O-(pantetheine 4'-phosphoryl)serine. The tract at residues Gly-684–Leu-979 is carboxylic acid reductase (R) domain. NADP(+) is bound by residues Thr-693–Ile-696, Arg-718, Asn-774–Trp-776, Ser-814, Tyr-844, and Lys-848.

This sequence belongs to the adenylate-forming reductase family. Mg(2+) serves as cofactor.

It carries out the reaction an aromatic aldehyde + AMP + diphosphate + NADP(+) = an aromatic carboxylate + ATP + NADPH + H(+). It catalyses the reaction a carboxylate + ATP + NADPH + H(+) = an aldehyde + AMP + diphosphate + NADP(+). The catalysed reaction is benzoate + ATP + NADPH + H(+) = benzaldehyde + AMP + diphosphate + NADP(+). The enzyme catalyses (E)-cinnamate + ATP + NADPH + H(+) = (E)-cinnamaldehyde + AMP + diphosphate + NADP(+). It carries out the reaction piperonylate + ATP + NADPH + H(+) = piperonal + AMP + diphosphate + NADP(+). It catalyses the reaction salicylate + ATP + NADPH + H(+) = salicylaldehyde + AMP + diphosphate + NADP(+). The catalysed reaction is 3-hydroxybenzoate + ATP + NADPH + H(+) = 3-hydroxybenzaldehyde + AMP + diphosphate + NADP(+). The enzyme catalyses 2-methoxybenzoate + ATP + NADPH + H(+) = 2-methoxybenzaldehyde + AMP + diphosphate + NADP(+). It carries out the reaction 3-methoxybenzoate + ATP + NADPH + H(+) = 3-methoxybenzaldehyde + AMP + diphosphate + NADP(+). It catalyses the reaction 4-hydroxybenzoate + ATP + NADPH + H(+) = 4-hydroxybenzaldehyde + AMP + diphosphate + NADP(+). The catalysed reaction is 4-methoxybenzoate + ATP + NADPH + H(+) = 4-methoxybenzaldehyde + AMP + diphosphate + NADP(+). The enzyme catalyses 3-phenylpropanoate + ATP + NADPH + H(+) = 3-phenylpropanal + AMP + diphosphate + NADP(+). It carries out the reaction picolinate + ATP + NADPH + H(+) = picolinal + AMP + diphosphate + NADP(+). It catalyses the reaction propanoate + ATP + NADPH + H(+) = propanal + AMP + diphosphate + NADP(+). The catalysed reaction is butanoate + ATP + NADPH + H(+) = butanal + AMP + diphosphate + NADP(+). The enzyme catalyses pentanoate + ATP + NADPH + H(+) = pentanal + AMP + diphosphate + NADP(+). It carries out the reaction hexanoate + ATP + NADPH + H(+) = hexanal + AMP + diphosphate + NADP(+). It catalyses the reaction heptanoate + ATP + NADPH + H(+) = heptanal + AMP + diphosphate + NADP(+). The catalysed reaction is octanoate + ATP + NADPH + H(+) = octanal + AMP + diphosphate + NADP(+). The enzyme catalyses nonanoate + ATP + NADPH + H(+) = nonanal + AMP + diphosphate + NADP(+). Carboxylic acid reductase that shows a broad range of substrate specificity towards aromatic acids, especially to phenyl carboxylic and phenyl acrylic acids, to convert them into their respective aldehydes. Also able to use aliphatic acids as substrates. The sequence is that of Carboxylic acid reductase from Neurospora crassa (strain ATCC 24698 / 74-OR23-1A / CBS 708.71 / DSM 1257 / FGSC 987).